The following is a 415-amino-acid chain: 3-isopropylmalate dehydratase large subunit (415 aa).

The [4Fe-4S] cluster site is built by cysteine 295, cysteine 353, and cysteine 356.

It belongs to the aconitase/IPM isomerase family. LeuC type 2 subfamily. Heterodimer of LeuC and LeuD. The cofactor is [4Fe-4S] cluster.

It catalyses the reaction (2R,3S)-3-isopropylmalate = (2S)-2-isopropylmalate. Its pathway is amino-acid biosynthesis; L-leucine biosynthesis; L-leucine from 3-methyl-2-oxobutanoate: step 2/4. In terms of biological role, catalyzes the isomerization between 2-isopropylmalate and 3-isopropylmalate, via the formation of 2-isopropylmaleate. The polypeptide is 3-isopropylmalate dehydratase large subunit (Pyrobaculum aerophilum (strain ATCC 51768 / DSM 7523 / JCM 9630 / CIP 104966 / NBRC 100827 / IM2)).